The chain runs to 408 residues: NADH-quinone oxidoreductase subunit D (408 aa).

It belongs to the complex I 49 kDa subunit family. In terms of assembly, NDH-1 is composed of 14 different subunits. Subunits NuoB, C, D, E, F, and G constitute the peripheral sector of the complex.

It is found in the cell inner membrane. It catalyses the reaction a quinone + NADH + 5 H(+)(in) = a quinol + NAD(+) + 4 H(+)(out). Its function is as follows. NDH-1 shuttles electrons from NADH, via FMN and iron-sulfur (Fe-S) centers, to quinones in the respiratory chain. The immediate electron acceptor for the enzyme in this species is believed to be ubiquinone. Couples the redox reaction to proton translocation (for every two electrons transferred, four hydrogen ions are translocated across the cytoplasmic membrane), and thus conserves the redox energy in a proton gradient. The protein is NADH-quinone oxidoreductase subunit D of Campylobacter jejuni subsp. jejuni serotype O:6 (strain 81116 / NCTC 11828).